A 132-amino-acid polypeptide reads, in one-letter code: Large ribosomal subunit protein uL24 (132 aa).

Belongs to the universal ribosomal protein uL24 family. As to quaternary structure, part of the 50S ribosomal subunit.

Functionally, one of two assembly initiator proteins, it binds directly to the 5'-end of the 23S rRNA, where it nucleates assembly of the 50S subunit. In terms of biological role, one of the proteins that surrounds the polypeptide exit tunnel on the outside of the subunit. This Aquifex aeolicus (strain VF5) protein is Large ribosomal subunit protein uL24.